We begin with the raw amino-acid sequence, 1676 residues long: Protein TIC 214 (1676 aa).

6 consecutive transmembrane segments (helical) span residues 23–43, 71–91, 96–116, 145–165, 179–199, and 226–246; these read AGPLIILGIYYGFLITLPIAP, GILIAAISGLTVSQLAFFLSI, LYMIWLKPHLLTLLVLPYMFF, AFLDSFLFQALNPVLLPSPVM, VSLFILGTAIGWLGGQIMFVL, and IFPPIVFGLCLAYMGRAPVSF.

This sequence belongs to the TIC214 family. In terms of assembly, part of the Tic complex.

The protein resides in the plastid. The protein localises to the chloroplast inner membrane. Its function is as follows. Involved in protein precursor import into chloroplasts. May be part of an intermediate translocation complex acting as a protein-conducting channel at the inner envelope. The protein is Protein TIC 214 of Zygnema circumcarinatum (Green alga).